A 486-amino-acid chain; its full sequence is Pentatricopeptide repeat-containing protein At3g06430, chloroplastic (486 aa).

The N-terminal 36 residues, 1-36 (MASMSLSFSSSLCSSRIPEGKRRFRHRDVGIVRCVL), are a transit peptide targeting the chloroplast. PPR repeat units follow at residues 123 to 157 (KEGT…GLEP), 158 to 188 (TVEL…MKSF), 194 to 228 (DVFT…LITP), 229 to 264 (NTVT…ACKP), 265 to 299 (DVWT…GIEP), 300 to 334 (ETRT…EFPW), 335 to 369 (TTST…GMKA), 370 to 404 (DTKT…EIPE), 405 to 439 (NTAF…QCVC), and 440 to 470 (DSRT…RQKL).

This sequence belongs to the PPR family. P subfamily.

It is found in the plastid. Its subcellular location is the chloroplast. This is Pentatricopeptide repeat-containing protein At3g06430, chloroplastic (EMB2750) from Arabidopsis thaliana (Mouse-ear cress).